The following is a 95-amino-acid chain: Transcription and mRNA export factor ENY2-2 (95 aa).

The protein belongs to the ENY2 family. As to quaternary structure, component of the nuclear pore complex (NPC)-associated TREX-2 complex (transcription and export complex 2). Component of the SAGA transcription coactivator-HAT complex. Within the SAGA complex, participates in a subcomplex of SAGA called the DUB module (deubiquitination module).

The protein resides in the nucleus. The protein localises to the nucleoplasm. In terms of biological role, involved in mRNA export coupled transcription activation by association with both the TREX-2 and the SAGA complexes. The transcription regulatory histone acetylation (HAT) complex SAGA is a multiprotein complex that activates transcription by remodeling chromatin and mediating histone acetylation and deubiquitination. Within the SAGA complex, participates in a subcomplex that specifically deubiquitinates histones. The SAGA complex is recruited to specific gene promoters by activators, where it is required for transcription. The TREX-2 complex functions in docking export-competent ribonucleoprotein particles (mRNPs) to the nuclear entrance of the nuclear pore complex (nuclear basket). TREX-2 participates in mRNA export and accurate chromatin positioning in the nucleus by tethering genes to the nuclear periphery. This Salmo salar (Atlantic salmon) protein is Transcription and mRNA export factor ENY2-2 (eny2-2).